Here is a 174-residue protein sequence, read N- to C-terminus: Small ribosomal subunit protein uS5 (174 aa).

The S5 DRBM domain maps to 18–81; it reads WQERVIQIRR…ADGKKHLIDI (64 aa).

This sequence belongs to the universal ribosomal protein uS5 family. In terms of assembly, part of the 30S ribosomal subunit. Contacts proteins S4 and S8.

With S4 and S12 plays an important role in translational accuracy. Its function is as follows. Located at the back of the 30S subunit body where it stabilizes the conformation of the head with respect to the body. This Trichormus variabilis (strain ATCC 29413 / PCC 7937) (Anabaena variabilis) protein is Small ribosomal subunit protein uS5.